The following is a 328-amino-acid chain: Phosphatidate cytidylyltransferase (328 aa).

Over residues 15–29 the composition is skewed to polar residues; the sequence is SGRSATKSVTTNDAG. Residues 15-50 are disordered; sequence SGRSATKSVTTNDAGTGNPAEQPARGAKQQPATETS. Helical transmembrane passes span 58–78, 103–123, 124–144, 173–193, 202–222, 239–259, and 263–283; these read AAIV…VFVP, AGYL…VWLT, WPFG…VCMI, ATVF…MLVY, FCMM…GVLF, GFAG…TFLV, and PWIG…GDLV.

This sequence belongs to the CDS family.

The protein localises to the cell membrane. The enzyme catalyses a 1,2-diacyl-sn-glycero-3-phosphate + CTP + H(+) = a CDP-1,2-diacyl-sn-glycerol + diphosphate. It participates in phospholipid metabolism; CDP-diacylglycerol biosynthesis; CDP-diacylglycerol from sn-glycerol 3-phosphate: step 3/3. In Mycobacterium tuberculosis (strain CDC 1551 / Oshkosh), this protein is Phosphatidate cytidylyltransferase (cdsA).